The sequence spans 283 residues: 4-diphosphocytidyl-2-C-methyl-D-erythritol kinase (283 aa).

K10 is a catalytic residue. 95–105 (PVAAGLGGGSS) serves as a coordination point for ATP. Residue D137 is part of the active site.

It belongs to the GHMP kinase family. IspE subfamily.

It carries out the reaction 4-CDP-2-C-methyl-D-erythritol + ATP = 4-CDP-2-C-methyl-D-erythritol 2-phosphate + ADP + H(+). Its pathway is isoprenoid biosynthesis; isopentenyl diphosphate biosynthesis via DXP pathway; isopentenyl diphosphate from 1-deoxy-D-xylulose 5-phosphate: step 3/6. Functionally, catalyzes the phosphorylation of the position 2 hydroxy group of 4-diphosphocytidyl-2C-methyl-D-erythritol. The polypeptide is 4-diphosphocytidyl-2-C-methyl-D-erythritol kinase (Limosilactobacillus reuteri (strain DSM 20016) (Lactobacillus reuteri)).